The following is a 551-amino-acid chain: MTMNETTSSLLEPDRDWWRGAVIYQIYPRSFQDTNGDGIGDLQGITARLPHIAGLGADAIWISPFFTSPMRDFGYDVSNYVDVDPIFGTLEDFDALIAEAHRLGLRVMIDLVLSHTSDRHPWFVESRSSRSNAKADWYVWADSKPDGTPPNNWLSIFGGSAWQWDPTRLQYYLHNFLTSQPDLNLHNPQVQEALLAVERFWLERGVDGFRLDTINFYFHDRELRDNPALVPERRNASTAPAVNPYNYQEHIYDKNRPENLEFLKRFRAVMDEFPAIAAVGEVGDSQRGLEIAGEYTSGGDKVHMCYAFEFLAPDRLTPQRVAEVLRDFHRAAPEGWACWAFSNHDVVRHVSRWADGVTDHDAHAKLLASLLMSLRGTVCIYQGEELALAEAELDYEDLQDPYGIQFWPDFKGRDGCRTPMVWESLPDGGFSSATPWLPISQSHIPRAVAVQEGDPASVLHHYRRFLAFRKANPALAKGEIEFVETRGSLLGFLRSHGNEKVFCLFNMSDEAATKELPMKRLEPLEGHGFVSEILDHEVKLPAWGAFFARLA.

Asp-212 acts as the Nucleophile in catalysis. Glu-272 (proton donor) is an active-site residue.

The protein belongs to the glycosyl hydrolase 13 family.

It carries out the reaction Hydrolysis of terminal, non-reducing (1-&gt;4)-linked alpha-D-glucose residues with release of alpha-D-glucose.. This is Probable alpha-glucosidase (aglA) from Rhizobium meliloti (strain 1021) (Ensifer meliloti).